The primary structure comprises 172 residues: Adenine phosphoribosyltransferase (172 aa).

Belongs to the purine/pyrimidine phosphoribosyltransferase family. As to quaternary structure, homodimer.

The protein resides in the cytoplasm. The catalysed reaction is AMP + diphosphate = 5-phospho-alpha-D-ribose 1-diphosphate + adenine. It functions in the pathway purine metabolism; AMP biosynthesis via salvage pathway; AMP from adenine: step 1/1. Catalyzes a salvage reaction resulting in the formation of AMP, that is energically less costly than de novo synthesis. The sequence is that of Adenine phosphoribosyltransferase from Clostridium perfringens (strain ATCC 13124 / DSM 756 / JCM 1290 / NCIMB 6125 / NCTC 8237 / Type A).